The primary structure comprises 134 residues: ATP synthase epsilon chain (134 aa).

The protein belongs to the ATPase epsilon chain family. In terms of assembly, F-type ATPases have 2 components, CF(1) - the catalytic core - and CF(0) - the membrane proton channel. CF(1) has five subunits: alpha(3), beta(3), gamma(1), delta(1), epsilon(1). CF(0) has three main subunits: a, b and c.

Its subcellular location is the cell membrane. Its function is as follows. Produces ATP from ADP in the presence of a proton gradient across the membrane. The protein is ATP synthase epsilon chain of Listeria monocytogenes serotype 4b (strain F2365).